A 441-amino-acid polypeptide reads, in one-letter code: Amino-acid acetyltransferase (441 aa).

Residues 295–434 (EQVRRATIND…QALYNYQRRS (140 aa)) form the N-acetyltransferase domain.

The protein belongs to the acetyltransferase family. ArgA subfamily. As to quaternary structure, homohexamer.

It localises to the cytoplasm. The catalysed reaction is L-glutamate + acetyl-CoA = N-acetyl-L-glutamate + CoA + H(+). It participates in amino-acid biosynthesis; L-arginine biosynthesis; N(2)-acetyl-L-ornithine from L-glutamate: step 1/4. This is Amino-acid acetyltransferase from Pectobacterium atrosepticum (strain SCRI 1043 / ATCC BAA-672) (Erwinia carotovora subsp. atroseptica).